Reading from the N-terminus, the 26-residue chain is Coenzyme PQQ synthesis protein A (26 aa).

The segment at residues 16 to 20 (EINMY) is a cross-link (pyrroloquinoline quinone (Glu-Tyr)).

It belongs to the PqqA family.

The protein operates within cofactor biosynthesis; pyrroloquinoline quinone biosynthesis. Functionally, required for coenzyme pyrroloquinoline quinone (PQQ) biosynthesis. PQQ is probably formed by cross-linking a specific glutamate to a specific tyrosine residue and excising these residues from the peptide. In Cereibacter sphaeroides (strain ATCC 17029 / ATH 2.4.9) (Rhodobacter sphaeroides), this protein is Coenzyme PQQ synthesis protein A.